The sequence spans 263 residues: tRNA dimethylallyltransferase (263 aa).

The protein belongs to the IPP transferase family. As to quaternary structure, monomer. Requires Mg(2+) as cofactor.

It catalyses the reaction adenosine(37) in tRNA + dimethylallyl diphosphate = N(6)-dimethylallyladenosine(37) in tRNA + diphosphate. In terms of biological role, catalyzes the transfer of a dimethylallyl group onto the adenine at position 37 in tRNAs that read codons beginning with uridine, leading to the formation of N6-(dimethylallyl)adenosine (i(6)A). In Leifsonia xyli subsp. xyli (strain CTCB07), this protein is tRNA dimethylallyltransferase.